The chain runs to 142 residues: Mini-ribonuclease 3 (142 aa).

The active site involves Asp33.

The protein belongs to the MrnC RNase family. As to quaternary structure, homodimer. Mg(2+) is required as a cofactor.

The protein resides in the cytoplasm. In terms of biological role, involved in correct processing of both the 5' and 3' ends of 23S rRNA precursor. Processes 30S rRNA precursor transcript even in absence of ribonuclease 3 (Rnc); Rnc processes 30S rRNA into smaller rRNA precursors. The protein is Mini-ribonuclease 3 of Thermoanaerobacter sp. (strain X514).